Here is a 138-residue protein sequence, read N- to C-terminus: MRTLWIVAVCLMGVEGHLTQFGDMINKKTGTFGLLSYVYYGCYCGLGGKGKPQDATDRCCFVHDCCYGTVNGCDPKLSTYSYSFQNGDIVCGDDDPCLRAVCECDRVAAICFGENMNTYDKKYMLYSFFDCMEESEKC.

Residues 1-16 (MRTLWIVAVCLMGVEG) form the signal peptide. 7 cysteine pairs are disulfide-bonded: cysteine 42–cysteine 131, cysteine 44–cysteine 60, cysteine 59–cysteine 111, cysteine 65–cysteine 138, cysteine 66–cysteine 104, cysteine 73–cysteine 97, and cysteine 91–cysteine 102. The Ca(2+) site is built by tyrosine 43, glycine 45, and glycine 47. Residue histidine 63 is part of the active site. Residue aspartate 64 participates in Ca(2+) binding. Aspartate 105 is a catalytic residue.

Belongs to the phospholipase A2 family. Group II subfamily. D49 sub-subfamily. Ca(2+) serves as cofactor. Expressed by the venom gland.

It is found in the secreted. It catalyses the reaction a 1,2-diacyl-sn-glycero-3-phosphocholine + H2O = a 1-acyl-sn-glycero-3-phosphocholine + a fatty acid + H(+). Snake venom phospholipase A2 (PLA2) that causes a sudden decrease of arterial blood pressure when injected into rat, but is not lethal. When co-injected with an uncharacterized basic protein (which did not show any enzymatic activity, but also causes a drop in blood pressure), this synergistical mixture is lethal. PLA2 catalyzes the calcium-dependent hydrolysis of the 2-acyl groups in 3-sn-phosphoglycerides. The chain is Acidic phospholipase A2 VpaPLA2 from Daboia palaestinae (Palestine viper).